A 330-amino-acid chain; its full sequence is Interleukin-12 subunit beta (330 aa).

The N-terminal stretch at 1-22 (MHPQQLVVSWFSLVLLASPIMA) is a signal peptide. The 84-residue stretch at 23 to 106 (IWELEKNVYV…LSHSLLLLHK (84 aa)) folds into the Ig-like C2-type domain. A disulfide bond links C50 and C90. N136 and N224 each carry an N-linked (GlcNAc...) asparagine glycan. One can recognise a Fibronectin type-III domain in the interval 239-330 (PPKNLQLKPL…WSEWASVSCS (92 aa)).

This sequence belongs to the IL-12B family. As to quaternary structure, heterodimer with IL12A; disulfide-linked. The heterodimer is known as interleukin IL-12. Heterodimer with IL23A; disulfide-linked. The heterodimer is known as interleukin IL-23. Also secreted as a monomer. Interacts with NBR1; this interaction promotes IL-12 secretion.

Its subcellular location is the secreted. Its function is as follows. Cytokine that can act as a growth factor for activated T and NK cells, enhance the lytic activity of NK/lymphokine-activated killer cells, and stimulate the production of IFN-gamma by resting PBMC. In terms of biological role, associates with IL23A to form the IL-23 interleukin, a heterodimeric cytokine which functions in innate and adaptive immunity. IL-23 may constitute with IL-17 an acute response to infection in peripheral tissues. IL-23 binds to a heterodimeric receptor complex composed of IL12RB1 and IL23R, activates the Jak-Stat signaling cascade, stimulates memory rather than naive T-cells and promotes production of pro-inflammatory cytokines. IL-23 induces autoimmune inflammation and thus may be responsible for autoimmune inflammatory diseases and may be important for tumorigenesis. The protein is Interleukin-12 subunit beta (IL12B) of Lama glama (Llama).